The primary structure comprises 794 residues: Cadherin-12 (794 aa).

The signal sequence occupies residues 1–23; it reads MLTRNCLSLLLWVLFDGGLLTPL. The propeptide occupies 24-54; sequence QPQPQQTLATEPRENVIHLPGQRSHFQRVKR. Cadherin domains follow at residues 55-160, 161-269, 270-384, 385-487, and 488-609; these read GWVW…EPKF, LDGP…PPRF, PKSI…PPVF, SKPL…EFPP, and EISV…IFLP. The Extracellular portion of the chain corresponds to 55 to 609; sequence GWVWNQFFVL…SCNVEAIFLP (555 aa). N-linked (GlcNAc...) asparagine glycosylation is present at N256. N-linked (GlcNAc...) asparagine glycosylation is found at N456, N537, and N545. The chain crosses the membrane as a helical span at residues 610 to 637; sequence VGLSTGALIAILLCIVILLAIVVLYVAL. Over 638 to 794 the chain is Cytoplasmic; that stretch reads RRQKKKDTLM…EESYNPDKVT (157 aa). At S787 the chain carries Phosphoserine.

Brain.

Its subcellular location is the cell membrane. Cadherins are calcium-dependent cell adhesion proteins. They preferentially interact with themselves in a homophilic manner in connecting cells; cadherins may thus contribute to the sorting of heterogeneous cell types. The protein is Cadherin-12 (CDH12) of Homo sapiens (Human).